A 503-amino-acid polypeptide reads, in one-letter code: U6 snRNA (guanine-N(2))-methyltransferase THUMPD2 (503 aa).

Positions 161-266 (CQLEKQIKEE…DIYSVVGIPV (106 aa)) constitute a THUMP domain.

This sequence belongs to the methyltransferase superfamily. In terms of assembly, part of the heterodimeric THUMPD2-TRM112 methyltransferase complex; this complex forms an active tRNA methyltransferase, where TRMT112 acts as an activator of the catalytic subunit THUMPD2. Expressed in a variety of tissues including brain, colon, gingiva, heart, kidney, liver, lung, placenta, small intestine, spleen and thymus.

It is found in the nucleus. The catalysed reaction is guanosine in U6 snRNA + S-adenosyl-L-methionine = N(2)-methylguanosine in U6 snRNA + S-adenosyl-L-homocysteine + H(+). Catalytic subunit of the THUMPD2-TRM112 methyltransferase complex, that specifically mediates the S-adenosyl-L-methionine-dependent N(2)-methylation of guanosine nucleotides, most probably at position 72 (m2G72), in the U6snRNA of the major spliceosome. This modification in the U6 snRNA affects the constitutive splicing efficiency of introns that have suboptimal splice sites and can impact final mRNA levels. The protein is U6 snRNA (guanine-N(2))-methyltransferase THUMPD2 of Homo sapiens (Human).